Reading from the N-terminus, the 249-residue chain is DNA polymerase sliding clamp (249 aa).

It belongs to the PCNA family. In terms of assembly, homotrimer which circularizes head-to-tail (head is a N-terminus, tail is at C-terminus) to form a toroid. RFC opens the toroid so it can load on DNA. Interacts with both Pol I (pol) and Pol II (polB-polC), with Hel308 (hjm) and with Hjc. Interaction with the C-terminal PIP-box of RfcL may stabilize the toroidal structure.

Its function is as follows. Sliding clamp subunit that acts as a moving platform for DNA processing. Responsible for tethering the catalytic subunit of DNA polymerase to DNA during high-speed replication. Unlike its eukaryotic paralog, loads on circular DNA without the replication factor C (RFC) clamp loader, although RFC greatly increases loading efficiency. Stimulates the ATPase activity of replication factor C (RFC) in the presence of ssDNA. Stimulates the helicase activity of Hel308 and may alter its substrate specificity. The polypeptide is DNA polymerase sliding clamp (Pyrococcus furiosus (strain ATCC 43587 / DSM 3638 / JCM 8422 / Vc1)).